The following is a 95-amino-acid chain: Large ribosomal subunit protein eL37y (95 aa).

Positions 19, 22, 34, and 37 each coordinate Zn(2+). The segment at 19–37 (CVRCGRRSFHIQKSRCSAC) adopts a C4-type zinc-finger fold.

Belongs to the eukaryotic ribosomal protein eL37 family. Zn(2+) serves as cofactor.

Its function is as follows. Binds to the 23S rRNA. In Arabidopsis thaliana (Mouse-ear cress), this protein is Large ribosomal subunit protein eL37y (RPL37B).